The primary structure comprises 192 residues: Phosphoheptose isomerase (192 aa).

Residues Leu-37–Lys-192 form the SIS domain. Asn-52–Gly-54 is a binding site for substrate. Zn(2+)-binding residues include His-61 and Glu-65. Substrate contacts are provided by residues Glu-65, Asn-93–Asp-94, Ser-119–Ser-121, Ser-124, and Gln-172. Zn(2+) is bound by residues Gln-172 and His-180.

Belongs to the SIS family. GmhA subfamily. Homotetramer. It depends on Zn(2+) as a cofactor.

It localises to the cytoplasm. It catalyses the reaction 2 D-sedoheptulose 7-phosphate = D-glycero-alpha-D-manno-heptose 7-phosphate + D-glycero-beta-D-manno-heptose 7-phosphate. It participates in carbohydrate biosynthesis; D-glycero-D-manno-heptose 7-phosphate biosynthesis; D-glycero-alpha-D-manno-heptose 7-phosphate and D-glycero-beta-D-manno-heptose 7-phosphate from sedoheptulose 7-phosphate: step 1/1. Its function is as follows. Catalyzes the isomerization of sedoheptulose 7-phosphate in D-glycero-D-manno-heptose 7-phosphate. The sequence is that of Phosphoheptose isomerase from Escherichia coli O7:K1 (strain IAI39 / ExPEC).